The chain runs to 131 residues: Olfactory receptor-like protein COR9 (131 aa).

Residues 1–16 (VAICSPLLYSTVMTKR) are Cytoplasmic-facing. Residues 17-41 (VCMQLVVGSYMGGLLNSLTHTCGLL) traverse the membrane as a helical segment. Over 42–82 (GLPFCGPNVINHYFCDIPPLLQLACSDTHRNETLLLAFSAV) the chain is Extracellular. A glycan (N-linked (GlcNAc...) asparagine) is linked at asparagine 72. A helical transmembrane segment spans residues 83-103 (IALFTLFVITASYMLILSVIL). Topologically, residues 104–116 (KIQSDDGRKKTFH) are cytoplasmic. A helical membrane pass occupies residues 117-131 (TCASHLTAITIFFGS).

Belongs to the G-protein coupled receptor 1 family.

The protein resides in the cell membrane. In terms of biological role, odorant receptor. This Gallus gallus (Chicken) protein is Olfactory receptor-like protein COR9 (COR9).